Reading from the N-terminus, the 211-residue chain is Probable calcium-binding protein CML11 (211 aa).

Disordered stretches follow at residues 1-22 (MSEPATTTPTPTPAGDHDAAAT) and 40-60 (SCSAQQQQQQQQQQEEPLGDD). Low complexity predominate over residues 44–53 (QQQQQQQQQQ). 4 EF-hand domains span residues 60–95 (DQLGELREIFRSFDRNGDGSLTQLELGSLLRSLGLK), 96–131 (PSTDELDSLIQRADTNSNGLIEFSEFVALVAPELLY), 136–171 (YSEDQIRRLFNIFDRDGNGFITAAELAHSMAKLGHA), and 172–207 (LTVKELTGMIKEADTDGDGRISFQEFSRAITAAAFD). Residues Asp73, Asn75, Asp77, Ser79, Glu84, Asp109, Asn111, Asn113, Glu120, Asp149, Asp151, Asn153, Glu160, Asp185, Asp187, Asp189, Arg191, and Glu196 each coordinate Ca(2+).

Functionally, potential calcium sensor. This Oryza sativa subsp. japonica (Rice) protein is Probable calcium-binding protein CML11 (CML11).